A 219-amino-acid chain; its full sequence is Small ribosomal subunit protein uS3c (219 aa).

A KH type-2 domain is found at 43-120 (IQNYIQKNMQ…KINITITKIT (78 aa)).

Belongs to the universal ribosomal protein uS3 family. Part of the 30S ribosomal subunit.

It is found in the plastid. The protein localises to the chloroplast. The protein is Small ribosomal subunit protein uS3c (rps3) of Oenothera elata subsp. hookeri (Hooker's evening primrose).